The sequence spans 346 residues: D-alanine--D-alanine ligase (346 aa).

Residues 134 to 340 form the ATP-grasp domain; it reads KFLAESLGVK…IDYTYIHSIQ (207 aa). 161–212 lines the ATP pocket; the sequence is EYPVIIKPVRLGSSIGVSIVKSEAELDYALDVAFEFDNDVIVEPFIDGVKEF. 3 residues coordinate Mg(2+): Asp-284, Glu-296, and Asn-298.

The protein belongs to the D-alanine--D-alanine ligase family. Requires Mg(2+) as cofactor. The cofactor is Mn(2+).

It is found in the cytoplasm. It catalyses the reaction 2 D-alanine + ATP = D-alanyl-D-alanine + ADP + phosphate + H(+). It participates in cell wall biogenesis; peptidoglycan biosynthesis. Its function is as follows. Cell wall formation. The chain is D-alanine--D-alanine ligase from Sulfurovum sp. (strain NBC37-1).